The following is a 161-amino-acid chain: MKLSDIADNAGSRKKRMRVGRGIGSGKGKQSGRGGKGQTARSGVRIKGFEGGQMPMHRRLPKRGFNNIFRVEFAEINLDRLQEAVDAKKIDAGSVVNVEALVKGGVLRRAKGGLRLLGRGELKSKLNIEVHGATKTAIAAVEKAGGSVKILAPAKEEGEAA.

Positions 1–42 (MKLSDIADNAGSRKKRMRVGRGIGSGKGKQSGRGGKGQTARS) are disordered. Gly residues predominate over residues 21-37 (RGIGSGKGKQSGRGGKG).

It belongs to the universal ribosomal protein uL15 family. In terms of assembly, part of the 50S ribosomal subunit.

In terms of biological role, binds to the 23S rRNA. The chain is Large ribosomal subunit protein uL15 from Bradyrhizobium diazoefficiens (strain JCM 10833 / BCRC 13528 / IAM 13628 / NBRC 14792 / USDA 110).